Consider the following 145-residue polypeptide: Copper transporter 6 (145 aa).

2 helical membrane passes run 47–67 and 99–119; these read LGMYVLCLIVVFLLAVIVEWL and YLVMLAVMSFNGGVFIVAIAG.

The protein belongs to the copper transporter (Ctr) (TC 1.A.56) family. SLC31A subfamily.

Its subcellular location is the membrane. Functionally, involved in the transport of copper. The polypeptide is Copper transporter 6 (COPT6) (Arabidopsis thaliana (Mouse-ear cress)).